An 89-amino-acid polypeptide reads, in one-letter code: Large ribosomal subunit protein bL27 (89 aa).

The segment at M1–I23 is disordered.

It belongs to the bacterial ribosomal protein bL27 family.

This is Large ribosomal subunit protein bL27 from Rhodopseudomonas palustris (strain BisA53).